Here is a 264-residue protein sequence, read N- to C-terminus: Apolipoprotein A-I (264 aa).

A signal peptide spans 1-18; that stretch reads MKTVVLAVAVLFLTGSQA. A run of 2 repeats spans residues 67–88 and 89–110. Positions 67-264 are 10 X approximate tandem repeats; it reads LNLLENWDTL…EEASKKLNAQ (198 aa). Residue Met109 is modified to Methionine sulfoxide. The stretch at 111 to 121 is one 3; half-length repeat; it reads KDLEEVKAKVQ. A run of 5 repeats spans residues 122-143, 144-165, 166-187, 188-207, and 208-229. Met193 carries the methionine sulfoxide modification. One copy of the 9; half-length repeat lies at 230 to 240; sequence PALEDLRQGLM. Position 240 is a methionine sulfoxide (Met240). Repeat unit 10 spans residues 241 to 264; the sequence is PVFESFKTRIMSMVEEASKKLNAQ.

This sequence belongs to the apolipoprotein A1/A4/E family. In terms of assembly, homodimer. Interacts with APOA1BP and CLU. Component of a sperm activating protein complex (SPAP), consisting of APOA1, an immunoglobulin heavy chain, an immunoglobulin light chain and albumin. Interacts with NDRG1. Interacts with SCGB3A2. Interacts with NAXE and YJEFN3. In terms of processing, glycosylated. Palmitoylated. Post-translationally, phosphorylation sites are present in the extracellular medium. As to expression, major protein of plasma HDL, also found in chylomicrons.

The protein localises to the secreted. In terms of biological role, participates in the reverse transport of cholesterol from tissues to the liver for excretion by promoting cholesterol efflux from tissues and by acting as a cofactor for the lecithin cholesterol acyltransferase (LCAT). As part of the SPAP complex, activates spermatozoa motility. This is Apolipoprotein A-I (APOAI) from Mesocricetus auratus (Golden hamster).